Reading from the N-terminus, the 215-residue chain is Floral homeotic protein GLOBOSA (215 aa).

One can recognise an MADS-box domain in the interval 3–57 (RGKIEIKRIENSSNRQVTYSKRRNGIMKKAKEISVLCDAHVSVIIFASSGKMHEF). Residues 84 to 170 (HEHLDNEINR…QFKLRQMHLD (87 aa)) enclose the K-box domain.

It is found in the nucleus. Functionally, transcription factor involved in the genetic control of flower development. Acts in conjunction with DEFICIENS (defA). This Antirrhinum majus (Garden snapdragon) protein is Floral homeotic protein GLOBOSA (GLO).